The sequence spans 294 residues: 4-hydroxy-tetrahydrodipicolinate synthase (294 aa).

Residue Thr-45 participates in pyruvate binding. The Proton donor/acceptor role is filled by Tyr-133. The active-site Schiff-base intermediate with substrate is the Lys-161. Ile-203 lines the pyruvate pocket.

The protein belongs to the DapA family. Homotetramer; dimer of dimers.

Its subcellular location is the cytoplasm. It carries out the reaction L-aspartate 4-semialdehyde + pyruvate = (2S,4S)-4-hydroxy-2,3,4,5-tetrahydrodipicolinate + H2O + H(+). Its pathway is amino-acid biosynthesis; L-lysine biosynthesis via DAP pathway; (S)-tetrahydrodipicolinate from L-aspartate: step 3/4. Catalyzes the condensation of (S)-aspartate-beta-semialdehyde [(S)-ASA] and pyruvate to 4-hydroxy-tetrahydrodipicolinate (HTPA). This chain is 4-hydroxy-tetrahydrodipicolinate synthase, found in Buchnera aphidicola subsp. Schizaphis graminum (strain Sg).